Consider the following 95-residue polypeptide: Co-chaperonin GroES (95 aa).

The protein belongs to the GroES chaperonin family. As to quaternary structure, heptamer of 7 subunits arranged in a ring. Interacts with the chaperonin GroEL.

It is found in the cytoplasm. Together with the chaperonin GroEL, plays an essential role in assisting protein folding. The GroEL-GroES system forms a nano-cage that allows encapsulation of the non-native substrate proteins and provides a physical environment optimized to promote and accelerate protein folding. GroES binds to the apical surface of the GroEL ring, thereby capping the opening of the GroEL channel. The sequence is that of Co-chaperonin GroES from Chlorobaculum parvum (strain DSM 263 / NCIMB 8327) (Chlorobium vibrioforme subsp. thiosulfatophilum).